The following is a 549-amino-acid chain: MGPENRRVLLATVLSVAVLIVWQFVFPSPKPKPQPPKPPEAAQRAEAPAAPAPGQPAAQAPAPAVPQDAPEQLVKLVGDGFEATLTSHGGAVKEIVLQGEKFRRDREGKPVQIDLVRVAKEQPYPLAVVATPELGGAEDAGNDVAARAPMRVVAQDARSATFEGRAGKATVRKTYRLTEKAYELALDLEVQAPATQGGGIVVLYPGYMPPDTKKGGFFSGPPVEFVRPVCRAGEETERFDVDGKEAQEKLQGTVAWAGMDQGYFVSAVFPAQPAGTCLFAKGPVQGSGLTALRLPLDGGSAKFGFTVYSGPKDLDHLRTYGREFESAIDYGAMARPFAFFARLLLFVMRWLERLVANWGLAIILLTVLVKVLLYPLTAKSMQSMNEMRKLQPEIEKLKAKHGNDREKLNLATMQLYQQHKVNPLGGCLPMLIQLPIWFALYATLQTSVELYREPFLWIHDLTVKDPLYVLPIAMGVSQYVMQRFSPQPADNAQAKMMLYFMPGFFTLLMLSVPAGLTLYIFVNNLLSIAQQQFMMRRMPAVPAPAKASK.

A helical membrane pass occupies residues 8 to 28 (VLLATVLSVAVLIVWQFVFPS). Residues 29–39 (PKPKPQPPKPP) are compositionally biased toward pro residues. The disordered stretch occupies residues 29 to 68 (PKPKPQPPKPPEAAQRAEAPAAPAPGQPAAQAPAPAVPQD). Composition is skewed to low complexity over residues 40–49 (EAAQRAEAPA) and 55–68 (QPAAQAPAPAVPQD). 4 consecutive transmembrane segments (helical) span residues 328-348 (IDYGAMARPFAFFARLLLFVM), 354-374 (LVANWGLAIILLTVLVKVLLY), 424-444 (LGGCLPMLIQLPIWFALYATL), and 502-522 (PGFFTLLMLSVPAGLTLYIFV).

It belongs to the OXA1/ALB3/YidC family. Type 1 subfamily. Interacts with the Sec translocase complex via SecD. Specifically interacts with transmembrane segments of nascent integral membrane proteins during membrane integration.

It is found in the cell inner membrane. Required for the insertion and/or proper folding and/or complex formation of integral membrane proteins into the membrane. Involved in integration of membrane proteins that insert both dependently and independently of the Sec translocase complex, as well as at least some lipoproteins. Aids folding of multispanning membrane proteins. The protein is Membrane protein insertase YidC of Anaeromyxobacter sp. (strain Fw109-5).